The chain runs to 61 residues: MATIVVKQIGSPIRRPEIQRKTLIGLGLNKMHRTRELEDTPSVRGMINKIPHLVEIVEERG.

The protein belongs to the universal ribosomal protein uL30 family. As to quaternary structure, part of the 50S ribosomal subunit.

This is Large ribosomal subunit protein uL30 from Jannaschia sp. (strain CCS1).